Reading from the N-terminus, the 383-residue chain is Trihelix transcription factor ASIL1 (383 aa).

4 disordered regions span residues methionine 1–asparagine 32, histidine 61–tryptophan 94, isoleucine 189–glycine 295, and glutamate 346–serine 383. Positions threonine 66–glycine 88 are enriched in gly residues. Positions tryptophan 94–lysine 153 constitute a Myb-like domain. Polar residues predominate over residues asparagine 206–glutamine 225. Residues glutamine 226–arginine 235 show a composition bias toward basic and acidic residues. Positions lysine 228–arginine 241 match the Bipartite nuclear localization signal motif. A compositionally biased stretch (acidic residues) spans threonine 246 to alanine 262. Low complexity predominate over residues glutamate 263–leucine 274. Positions phenylalanine 304–arginine 365 form a coiled coil. The span at glutamate 356–valine 367 shows a compositional bias: basic and acidic residues.

It localises to the nucleus. Its function is as follows. Transcription repressor that binds specific DNA sequence such as the GT-box-like motif 5'-CGTGATT-3' in the AT2S3 promoter. Negative regulator of seed maturation genes during seed germination and seedling development. May target GT-box-containing embryonic genes by competing with the binding of transcriptional activators to this promoter region. Contributes to the maintenance and control of seed filling and may repress the maturation program during early embryogenesis. This Arabidopsis thaliana (Mouse-ear cress) protein is Trihelix transcription factor ASIL1.